The following is a 575-amino-acid chain: UvrABC system protein C (575 aa).

Positions 16–94 (SQPGVYRMYD…IKLYQPRYNV (79 aa)) constitute a GIY-YIG domain. In terms of domain architecture, UVR spans 204–239 (DQVLTQLISRMETASQNLEFEEAARIRDQIQAVRRV).

The protein belongs to the UvrC family. As to quaternary structure, interacts with UvrB in an incision complex.

The protein localises to the cytoplasm. The UvrABC repair system catalyzes the recognition and processing of DNA lesions. UvrC both incises the 5' and 3' sides of the lesion. The N-terminal half is responsible for the 3' incision and the C-terminal half is responsible for the 5' incision. In Shigella dysenteriae serotype 1 (strain Sd197), this protein is UvrABC system protein C.